The following is a 393-amino-acid chain: MEHLLNPKAREIEISGIRKFSNLVAQHEDVISLTIGQPDFFTPHHVKAAAKKAIDENVTSYTPNAGYLELRQAVQLYMKKKADFNYDAESEIIITTGASQAIDAAFRTILSPGDEVIMPGPIYPGYEPIINLCGAKPVIVDTTSHGFKLTARLIEDALTPNTKCVVLPYPSNPTGVTLSEEELKSIAALLKGRNVFVLSDEIYSELTYDRPHYSIATYLRDQTIVINGLSKSHSMTGWRIGFLFAPKDIAKHILKVHQYNVSCASSISQKAALEAVTNGFDDALIMREQYKKRLDYVYDRLVSMGLDVVKPSGAFYIFPSIKSFGMTSFDFSMALLEDAGVALVPGSSFSTYGEGYVRLSFACSMDTLREGLDRLELFVLKKREAMQTINNGV.

N6-(pyridoxal phosphate)lysine is present on Lys-231.

This sequence belongs to the class-I pyridoxal-phosphate-dependent aminotransferase family. As to quaternary structure, homodimer. It depends on pyridoxal 5'-phosphate as a cofactor.

It localises to the cytoplasm. It catalyses the reaction N-acetyl-(2S,6S)-2,6-diaminopimelate + 2-oxoglutarate = L-2-acetamido-6-oxoheptanedioate + L-glutamate. The protein operates within amino-acid biosynthesis; L-lysine biosynthesis via DAP pathway; LL-2,6-diaminopimelate from (S)-tetrahydrodipicolinate (acetylase route): step 2/3. Its function is as follows. Essential for murein biosynthesis. Probably catalyzes the conversion of L-2-acetamido-6-oxopimelate to N-acetyl-LL-2,6-diaminopimelate. The protein is Probable N-acetyl-LL-diaminopimelate aminotransferase of Bacillus subtilis (strain 168).